Here is a 166-residue protein sequence, read N- to C-terminus: MFPMVTEFMNYGQQTIRAARYIGQGFMITLSHANRLPVTIQYPYEKLITSERFRGRIHFEFDKCIACEVCVRVCPIDLPVVDWKLETDIRKKRLLNYSIDFGICIFCGHCVEYCPTNCLSMTEEYELSTYDRHELNYNQIALGRLPMSIIDDYTIRTILNLPEIKT.

4Fe-4S ferredoxin-type domains follow at residues 55 to 84 and 95 to 124; these read GRIHFEFDKCIACEVCVRVCPIDLPVVDWK and LNYSIDFGICIFCGHCVEYCPTNCLSMTEE. [4Fe-4S] cluster contacts are provided by Cys64, Cys67, Cys70, Cys74, Cys104, Cys107, Cys110, and Cys114.

Belongs to the complex I 23 kDa subunit family. In terms of assembly, NDH is composed of at least 16 different subunits, 5 of which are encoded in the nucleus. Requires [4Fe-4S] cluster as cofactor.

Its subcellular location is the plastid. It is found in the chloroplast thylakoid membrane. It carries out the reaction a plastoquinone + NADH + (n+1) H(+)(in) = a plastoquinol + NAD(+) + n H(+)(out). The enzyme catalyses a plastoquinone + NADPH + (n+1) H(+)(in) = a plastoquinol + NADP(+) + n H(+)(out). Its function is as follows. NDH shuttles electrons from NAD(P)H:plastoquinone, via FMN and iron-sulfur (Fe-S) centers, to quinones in the photosynthetic chain and possibly in a chloroplast respiratory chain. The immediate electron acceptor for the enzyme in this species is believed to be plastoquinone. Couples the redox reaction to proton translocation, and thus conserves the redox energy in a proton gradient. This Perymeniopsis ovalifolia protein is NAD(P)H-quinone oxidoreductase subunit I, chloroplastic.